The following is a 1040-amino-acid chain: Vacuolar membrane protease (1040 aa).

The Cytoplasmic segment spans residues M1–P9. The helical transmembrane segment at G10–I30 threads the bilayer. The Vacuolar portion of the chain corresponds to N31–M405. N48, N117, N120, and N129 each carry an N-linked (GlcNAc...) asparagine glycan. The Zn(2+) site is built by H186 and D198. The active-site Proton acceptor is the E232. Zn(2+)-binding residues include E233, E258, and H331. A helical membrane pass occupies residues F406–L426. The Cytoplasmic portion of the chain corresponds to L427 to F436. Residues T437 to W456 form a helical membrane-spanning segment. At K457 to W462 the chain is on the vacuolar side. A helical transmembrane segment spans residues A463–V483. The Cytoplasmic segment spans residues R484–R490. Residues G491–L511 form a helical membrane-spanning segment. The Vacuolar portion of the chain corresponds to E512–Y521. A helical transmembrane segment spans residues I522 to L542. Residues A543–H715 lie on the Cytoplasmic side of the membrane. Positions H563–T680 are disordered. Low complexity-rich tracts occupy residues S577 to P594 and A616 to P626. Residues G636 to T647 are compositionally biased toward polar residues. Residues D650–A661 are compositionally biased toward acidic residues. Residues L716 to A736 traverse the membrane as a helical segment. Topologically, residues A737 to F758 are vacuolar. Residues T759–I779 form a helical membrane-spanning segment. The Cytoplasmic portion of the chain corresponds to H780 to H785. Residues I786–P806 traverse the membrane as a helical segment. At F807–V1040 the chain is on the vacuolar side. N900 carries an N-linked (GlcNAc...) asparagine glycan.

This sequence belongs to the peptidase M28 family. Zn(2+) is required as a cofactor.

It is found in the vacuole membrane. Functionally, may be involved in vacuolar sorting and osmoregulation. The chain is Vacuolar membrane protease from Sordaria macrospora (strain ATCC MYA-333 / DSM 997 / K(L3346) / K-hell).